The following is a 347-amino-acid chain: MAFAPKTSSSSSLSSALQAAQSPPLLLRRMSSTATPRRRYDAAVVVTTTTTARAAAAAVTVPAAPPQAPAPAPVPPKQAAAPAERRSRPVSDTMAALMAKGKTAFIPYITAGDPDLATTAEALRLLDGCGADVIELGVPCSDPYIDGPIIQASVARALASGTTMDAVLEMLREVTPELSCPVVLLSYYKPIMSRSLAEMKEAGVHGLIVPDLPYVAAHSLWSEAKNNNLELVLLTTPAIPEDRMKEITKASEGFVYLVSVNGVTGPRANVNPRVESLIQEVKKVTNKPVAVGFGISKPEHVKQIAQWGADGVIIGSAMVRQLGEAASPKQGLRRLEEYARGMKNALP.

Disordered regions lie at residues 1–38 (MAFA…TPRR) and 64–89 (APPQ…RSRP). Residues 1 to 53 (MAFAPKTSSSSSLSSALQAAQSPPLLLRRMSSTATPRRRYDAAVVVTTTTTAR) constitute a chloroplast transit peptide. Residues 8-27 (SSSSSLSSALQAAQSPPLLL) are compositionally biased toward low complexity. Positions 64 to 76 (APPQAPAPAPVPP) are enriched in pro residues.

It belongs to the TrpA family. Tetramer of two alpha and two beta chains for the tryptophan synthase activity. Homodimer of alpha chains for the indole-3-glycerol phosphate lyase activity.

It localises to the plastid. The protein localises to the chloroplast. The enzyme catalyses (1S,2R)-1-C-(indol-3-yl)glycerol 3-phosphate = indole + D-glyceraldehyde 3-phosphate. It catalyses the reaction (1S,2R)-1-C-(indol-3-yl)glycerol 3-phosphate + L-serine = D-glyceraldehyde 3-phosphate + L-tryptophan + H2O. It functions in the pathway secondary metabolite biosynthesis; 2,4-dihydroxy-1,4-benzoxazin-3-one biosynthesis; 2,4-dihydroxy-1,4-benzoxazin-3-one from indoleglycerol phosphate: step 1/5. It participates in amino-acid biosynthesis; L-tryptophan biosynthesis; L-tryptophan from chorismate: step 5/5. Functionally, the alpha subunit is responsible for the aldol cleavage of indoleglycerol phosphate to indole and glyceraldehyde 3-phosphate. In bacteria, tryptophan synthase alpha (TSA) activity is almost completely dependent on formation of an active alpha2beta2 complex with tryptophan synthase beta (TSB), and indole is usually not released during tryptophan synthesis. In maize, the TSA homolog BX1 catalyzes the formation of free indole from indole-3-glycerol phosphate, independently of TSB. The chain is Indole-3-glycerol phosphate lyase, chloroplastic (BX1) from Zea mays (Maize).